The sequence spans 382 residues: S-adenosylmethionine synthase (382 aa).

His-16 serves as a coordination point for ATP. Asp-18 contacts Mg(2+). Residue Glu-44 coordinates K(+). Residues Glu-57 and Gln-100 each coordinate L-methionine. The interval 100–110 (QSADIAIGVDE) is flexible loop. ATP-binding positions include 165-167 (DAK), Asp-240, 246-247 (RK), Ala-263, and Lys-267. Position 240 (Asp-240) interacts with L-methionine. Lys-271 is an L-methionine binding site.

Belongs to the AdoMet synthase family. As to quaternary structure, homotetramer; dimer of dimers. It depends on Mg(2+) as a cofactor. The cofactor is K(+).

The protein resides in the cytoplasm. It carries out the reaction L-methionine + ATP + H2O = S-adenosyl-L-methionine + phosphate + diphosphate. It participates in amino-acid biosynthesis; S-adenosyl-L-methionine biosynthesis; S-adenosyl-L-methionine from L-methionine: step 1/1. Its function is as follows. Catalyzes the formation of S-adenosylmethionine (AdoMet) from methionine and ATP. The overall synthetic reaction is composed of two sequential steps, AdoMet formation and the subsequent tripolyphosphate hydrolysis which occurs prior to release of AdoMet from the enzyme. The sequence is that of S-adenosylmethionine synthase from Alcanivorax borkumensis (strain ATCC 700651 / DSM 11573 / NCIMB 13689 / SK2).